The primary structure comprises 394 residues: MGGAAARLGAVILFVVIVGLHGVRSKYALVDASLKMADPNRFRGKDLPVLDQLTDPPGVRRVYHIQAGLPDPFQPPSLPITVYYAVLERACRSVLLNAPSEAPQIVRGASEDVRKQPYNLTIAWFRMGGNCAIPITVMEYTECSYNKSLGACPIRTQPRWNYYDSFSAVSEDNLGFLMHAPAFETAGTYLRLVKINDWTEITQFILEHRAKGSCKYALPLRIPPSACLSPQAYQQGVTVDSIGMLPRFIPENQRTVAVYSLKIAGWHGPKAPYTSTLLPPELSETPNATQPELAPEDPEDSALLEDPVGTVAPQIPPNWHIPSIQDAATPYHPPATPNNMGLIAGAVGGSLLAALVICGIVYWMRRHTQKAPKRIRLPHIREDDQPSSHQPLFY.

Residues 1–25 (MGGAAARLGAVILFVVIVGLHGVRS) form the signal peptide. Residues 26–57 (KYALVDASLKMADPNRFRGKDLPVLDQLTDPP) form an interaction with TNFRSF14 region. Residues 26 to 340 (KYALVDASLK…YHPPATPNNM (315 aa)) are Virion surface-facing. Zn(2+) is bound at residue histidine 64. 3 cysteine pairs are disulfide-bonded: cysteine 91/cysteine 214, cysteine 131/cysteine 227, and cysteine 143/cysteine 152. Residues asparagine 119 and asparagine 146 are each glycosylated (N-linked (GlcNAc...) asparagine; by host). Residue aspartate 240 participates in Zn(2+) binding. The tract at residues 261–305 (LKIAGWHGPKAPYTSTLLPPELSETPNATQPELAPEDPEDSALLE) is profusion. The tract at residues 275–301 (STLLPPELSETPNATQPELAPEDPEDS) is disordered. Asparagine 287 is a glycosylation site (N-linked (GlcNAc...) asparagine; by host). The helical transmembrane segment at 341-361 (GLIAGAVGGSLLAALVICGIV) threads the bilayer. Over 362–394 (YWMRRHTQKAPKRIRLPHIREDDQPSSHQPLFY) the chain is Intravirion. Residues 375–394 (IRLPHIREDDQPSSHQPLFY) are disordered.

This sequence belongs to the herpesviridae glycoprotein D family. In terms of assembly, homodimer. Interacts with host receptor TNFRSF14. Interacts with host receptor NECTIN1. Interacts (via profusion domain) with gB; this interaction occurs in the absence of gH/gL. Interacts (via profusion domain) with gH/gL heterodimer; this interaction occurs in the absence of gB. Associates with the gB-gH/gL-gD complex. Interacts (via C-terminus) with UL11 tegument protein. Interacts (via C-terminus) with VP22 tegument protein; this interaction has been demonstrated in other strains, but might be very weak since PubMed:19279114 has failed to see it. Interacts with host RSAD2.

The protein localises to the virion membrane. It localises to the host Golgi apparatus. Functionally, envelope glycoprotein that binds to the host cell entry receptors NECTIN1, TNFRSF14/HVEM and 3-O-sulfated heparan sulfate, promoting the virus entry into host cells. May trigger fusion with host membrane, by recruiting the fusion machinery composed of gB and gH/gL. The protein is Envelope glycoprotein D (gD) of Homo sapiens (Human).